An 80-amino-acid chain; its full sequence is Small membrane A-kinase anchor protein (80 aa).

Residue Gly-2 is the site of N-myristoyl glycine attachment.

This sequence belongs to the small membrane AKAP family. May be palmitoylated at Cys-3.

It is found in the cell membrane. Its function is as follows. Binds to type I regulatory subunits of protein kinase A and may anchor/target them to the plasma membrane. The sequence is that of Small membrane A-kinase anchor protein from Tetraodon nigroviridis (Spotted green pufferfish).